Here is a 452-residue protein sequence, read N- to C-terminus: Phosphoglucosamine mutase (452 aa).

The active-site Phosphoserine intermediate is the Ser-105. Residues Ser-105, Asp-244, Asp-246, and Asp-248 each coordinate Mg(2+). Ser-105 bears the Phosphoserine mark.

It belongs to the phosphohexose mutase family. The cofactor is Mg(2+). In terms of processing, activated by phosphorylation.

The catalysed reaction is alpha-D-glucosamine 1-phosphate = D-glucosamine 6-phosphate. In terms of biological role, catalyzes the conversion of glucosamine-6-phosphate to glucosamine-1-phosphate. This Blochmanniella floridana protein is Phosphoglucosamine mutase.